The primary structure comprises 126 residues: Small ribosomal subunit protein uS8 (126 aa).

It belongs to the universal ribosomal protein uS8 family. As to quaternary structure, part of the 30S ribosomal subunit. Contacts proteins S5 and S12.

Functionally, one of the primary rRNA binding proteins, it binds directly to 16S rRNA central domain where it helps coordinate assembly of the platform of the 30S subunit. The chain is Small ribosomal subunit protein uS8 from Nitratidesulfovibrio vulgaris (strain ATCC 29579 / DSM 644 / CCUG 34227 / NCIMB 8303 / VKM B-1760 / Hildenborough) (Desulfovibrio vulgaris).